Consider the following 51-residue polypeptide: Insulin (51 aa).

Disulfide bonds link cysteine 7–cysteine 37, cysteine 19–cysteine 50, and cysteine 36–cysteine 41.

Belongs to the insulin family. Heterodimer of a B chain and an A chain linked by two disulfide bonds.

It is found in the secreted. Functionally, insulin decreases blood glucose concentration. It increases cell permeability to monosaccharides, amino acids and fatty acids. It accelerates glycolysis, the pentose phosphate cycle, and glycogen synthesis in liver. The sequence is that of Insulin (INS) from Meleagris gallopavo (Wild turkey).